The sequence spans 179 residues: MNRLKEKYNKEITPALMKKFEYKSVMQVPKIEKIVINMGVGDAVQNAKAIDSAVEELTFIAGQKPVVTRAKKSIAGFRLREGMPIGAKVTLRGERMYDFLDKLISVSLPRVRDFRGISKKSFDGRGNYTLGIKEQLIFPEIDYDKVTKVRGMDIVIVTTANTDEEARELLTQLGMPFQK.

Belongs to the universal ribosomal protein uL5 family. In terms of assembly, part of the 50S ribosomal subunit; part of the 5S rRNA/L5/L18/L25 subcomplex. Contacts the 5S rRNA and the P site tRNA. Forms a bridge to the 30S subunit in the 70S ribosome.

This is one of the proteins that bind and probably mediate the attachment of the 5S RNA into the large ribosomal subunit, where it forms part of the central protuberance. In the 70S ribosome it contacts protein S13 of the 30S subunit (bridge B1b), connecting the 2 subunits; this bridge is implicated in subunit movement. Contacts the P site tRNA; the 5S rRNA and some of its associated proteins might help stabilize positioning of ribosome-bound tRNAs. This is Large ribosomal subunit protein uL5 from Bacillus licheniformis (strain ATCC 14580 / DSM 13 / JCM 2505 / CCUG 7422 / NBRC 12200 / NCIMB 9375 / NCTC 10341 / NRRL NRS-1264 / Gibson 46).